A 449-amino-acid polypeptide reads, in one-letter code: Adenylosuccinate lyase (449 aa).

Residues 9 to 10, 75 to 77, and 102 to 103 each bind N(6)-(1,2-dicarboxyethyl)-AMP; these read RY, KHD, and TS. His150 serves as the catalytic Proton donor/acceptor. Gln224 provides a ligand contact to N(6)-(1,2-dicarboxyethyl)-AMP. Ser275 functions as the Proton donor/acceptor in the catalytic mechanism. N(6)-(1,2-dicarboxyethyl)-AMP is bound by residues Ser276, 281-283, and 320-324; these read KMN and SSERI.

The protein belongs to the lyase 1 family. Adenylosuccinate lyase subfamily. Homotetramer. Residues from neighboring subunits contribute catalytic and substrate-binding residues to each active site.

It catalyses the reaction N(6)-(1,2-dicarboxyethyl)-AMP = fumarate + AMP. It carries out the reaction (2S)-2-[5-amino-1-(5-phospho-beta-D-ribosyl)imidazole-4-carboxamido]succinate = 5-amino-1-(5-phospho-beta-D-ribosyl)imidazole-4-carboxamide + fumarate. It functions in the pathway purine metabolism; AMP biosynthesis via de novo pathway; AMP from IMP: step 2/2. The protein operates within purine metabolism; IMP biosynthesis via de novo pathway; 5-amino-1-(5-phospho-D-ribosyl)imidazole-4-carboxamide from 5-amino-1-(5-phospho-D-ribosyl)imidazole-4-carboxylate: step 2/2. In terms of biological role, catalyzes two reactions in de novo purine nucleotide biosynthesis. Catalyzes the breakdown of 5-aminoimidazole- (N-succinylocarboxamide) ribotide (SAICAR or 2-[5-amino-1-(5-phospho-beta-D-ribosyl)imidazole-4-carboxamido]succinate) to 5-aminoimidazole-4-carboxamide ribotide (AICAR or 5-amino-1-(5-phospho-beta-D-ribosyl)imidazole-4-carboxamide) and fumarate, and of adenylosuccinate (ADS or N(6)-(1,2-dicarboxyethyl)-AMP) to adenosine monophosphate (AMP) and fumarate. The chain is Adenylosuccinate lyase (purB) from Methanothermobacter thermautotrophicus (strain ATCC 29096 / DSM 1053 / JCM 10044 / NBRC 100330 / Delta H) (Methanobacterium thermoautotrophicum).